Consider the following 129-residue polypeptide: Small ribosomal subunit protein uS11 (129 aa).

The protein belongs to the universal ribosomal protein uS11 family. Part of the 30S ribosomal subunit. Interacts with proteins S7 and S18. Binds to IF-3.

Functionally, located on the platform of the 30S subunit, it bridges several disparate RNA helices of the 16S rRNA. Forms part of the Shine-Dalgarno cleft in the 70S ribosome. The protein is Small ribosomal subunit protein uS11 of Halalkalibacterium halodurans (strain ATCC BAA-125 / DSM 18197 / FERM 7344 / JCM 9153 / C-125) (Bacillus halodurans).